Consider the following 176-residue polypeptide: NAD(P)H-quinone oxidoreductase subunit 6, chloroplastic (176 aa).

The next 5 membrane-spanning stretches (helical) occupy residues 10–30, 32–52, 63–83, 92–112, and 152–172; these read FILVFLGSGLILGSLGVVFFT, TIFSAFSLGLVLVCVSLFYIL, LLIYVGAINVLIIFAVMFMNG, VWTVGDGITLMVCTSIFISQI, and FFLPFELISIILLVALIGAIF.

Belongs to the complex I subunit 6 family. As to quaternary structure, NDH is composed of at least 16 different subunits, 5 of which are encoded in the nucleus.

It is found in the plastid. The protein resides in the chloroplast thylakoid membrane. It catalyses the reaction a plastoquinone + NADH + (n+1) H(+)(in) = a plastoquinol + NAD(+) + n H(+)(out). The enzyme catalyses a plastoquinone + NADPH + (n+1) H(+)(in) = a plastoquinol + NADP(+) + n H(+)(out). In terms of biological role, NDH shuttles electrons from NAD(P)H:plastoquinone, via FMN and iron-sulfur (Fe-S) centers, to quinones in the photosynthetic chain and possibly in a chloroplast respiratory chain. The immediate electron acceptor for the enzyme in this species is believed to be plastoquinone. Couples the redox reaction to proton translocation, and thus conserves the redox energy in a proton gradient. This Phaseolus vulgaris (Kidney bean) protein is NAD(P)H-quinone oxidoreductase subunit 6, chloroplastic (ndhG).